We begin with the raw amino-acid sequence, 592 residues long: BRCA1-associated protein (592 aa).

The residue at position 52 (Ser-52) is a Phosphoserine. The segment at 78–124 (KSNPDELKTTVEERKSSEASPTAQRSKDHSKECINAAPDSPSKQLPD) is disordered. Over residues 80-94 (NPDELKTTVEERKSS) the composition is skewed to basic and acidic residues. Phosphoserine occurs at positions 97, 117, and 119. The segment at 264-304 (CTVCLERMDESVNGILTTLCNHSFHSQCLQRWDDTTCPVCR) adopts an RING-type zinc-finger fold. The segment at 301-393 (PVCRYCQTPE…GKIVQYECEG (93 aa)) adopts a UBP-type; degenerate zinc-finger fold. Zn(2+) contacts are provided by Cys-317, Cys-320, Cys-329, Cys-332, Cys-337, His-344, His-348, and His-354. A coiled-coil region spans residues 429–537 (RIEKDTAEEI…EIQEQLRDVM (109 aa)). The disordered stretch occupies residues 565 to 592 (AMASASSPASSGGSGKLPSRKGRSKRGK). Over residues 582-592 (PSRKGRSKRGK) the composition is skewed to basic residues.

In terms of assembly, interacts with the nuclear localization signal of BRCA1 and with the N-terminal of KSR1. The C-terminal portion of BCRA1 interacts with DDB1. Expressed in breast epithelial cell lines.

The protein localises to the cytoplasm. It carries out the reaction S-ubiquitinyl-[E2 ubiquitin-conjugating enzyme]-L-cysteine + [acceptor protein]-L-lysine = [E2 ubiquitin-conjugating enzyme]-L-cysteine + N(6)-ubiquitinyl-[acceptor protein]-L-lysine.. Its pathway is protein modification; protein ubiquitination. Its function is as follows. Negatively regulates MAP kinase activation by limiting the formation of Raf/MEK complexes probably by inactivation of the KSR1 scaffold protein. Also acts as a Ras responsive E3 ubiquitin ligase that, on activation of Ras, is modified by auto-polyubiquitination resulting in the release of inhibition of Raf/MEK complex formation. May also act as a cytoplasmic retention protein with a role in regulating nuclear transport. This Homo sapiens (Human) protein is BRCA1-associated protein.